The chain runs to 201 residues: Small ribosomal subunit protein uS4c (201 aa).

The segment at 20 to 43 is disordered; it reads GLTSKRPRAGSDLRNQSRSGKRSQ. Residues 89-149 enclose the S4 RNA-binding domain; sequence MRLDNILFRL…NEQKSRALIQ (61 aa).

This sequence belongs to the universal ribosomal protein uS4 family. In terms of assembly, part of the 30S ribosomal subunit. Contacts protein S5. The interaction surface between S4 and S5 is involved in control of translational fidelity.

It localises to the plastid. The protein resides in the chloroplast. Functionally, one of the primary rRNA binding proteins, it binds directly to 16S rRNA where it nucleates assembly of the body of the 30S subunit. Its function is as follows. With S5 and S12 plays an important role in translational accuracy. The polypeptide is Small ribosomal subunit protein uS4c (rps4) (Vitis vinifera (Grape)).